Consider the following 210-residue polypeptide: Glycerol-3-phosphate acyltransferase 2 (210 aa).

The next 6 membrane-spanning stretches (helical) occupy residues Leu4–Tyr24, Phe54–Val74, Leu82–Leu102, Ile114–Val134, Phe141–Gln161, and Asp163–Pro183.

Belongs to the PlsY family. In terms of assembly, probably interacts with PlsX.

It localises to the cell membrane. It catalyses the reaction an acyl phosphate + sn-glycerol 3-phosphate = a 1-acyl-sn-glycero-3-phosphate + phosphate. Its pathway is lipid metabolism; phospholipid metabolism. Catalyzes the transfer of an acyl group from acyl-phosphate (acyl-PO(4)) to glycerol-3-phosphate (G3P) to form lysophosphatidic acid (LPA). This enzyme utilizes acyl-phosphate as fatty acyl donor, but not acyl-CoA or acyl-ACP. The sequence is that of Glycerol-3-phosphate acyltransferase 2 from Dehalococcoides mccartyi (strain ATCC BAA-2266 / KCTC 15142 / 195) (Dehalococcoides ethenogenes (strain 195)).